Consider the following 458-residue polypeptide: Peptidyl-prolyl cis-trans isomerase FKBP4 (458 aa).

Position 1 is an N-acetylmethionine; in peptidyl-prolyl cis-trans isomerase FKBP4; alternate (Met1). The residue at position 2 (Thr2) is an N-acetylthreonine; in peptidyl-prolyl cis-trans isomerase FKBP4, N-terminally processed; partial. One can recognise a PPIase FKBP-type 1 domain in the interval 50 to 138 (GDRVFVHYTG…VFEVELFEFK (89 aa)). Thr143 carries the phosphothreonine; by CK2 modification. The PPIase FKBP-type 2 domain occupies 167 to 253 (GAMVEVALEG…RYEVHLKSFE (87 aa)). At Tyr220 the chain carries Phosphotyrosine. The interval 267 to 400 (LEQSNIVKER…TQLAVCQQRT (134 aa)) is interaction with tubulin. 3 TPR repeats span residues 270–303 (SNIVKERGTVYFKEGKYKQALLQYKKIVSWLEYE), 319–352 (LASHLNLAMCHLKLQAFSAAIESCNKALELDSNN), and 353–386 (EKGLFRRGEAHLAVNDFDLARADFQKVLQLYPSN). At Lys282 the chain carries N6-acetyllysine. Residue Arg373 is modified to Omega-N-methylarginine. A disordered region spans residues 423-458 (HKAKTEVAAGDHPTDAEMKGEPNNVAGNQAQVKTEA). Thr436 carries the post-translational modification Phosphothreonine. Residue Lys441 forms a Glycyl lysine isopeptide (Lys-Gly) (interchain with G-Cter in SUMO1) linkage. Residues 447 to 458 (VAGNQAQVKTEA) are compositionally biased toward polar residues.

As to quaternary structure, homodimer. Interacts with GLMN. Associates with HSP90AA1 and HSP70 in steroid hormone receptor complexes. Also interacts with peroxisomal phytanoyl-CoA alpha-hydroxylase (PHYH). Interacts with NR3C1 and dynein. Interacts with HSF1 in the HSP90 complex. Associates with tubulin. Interacts with MAPT/TAU. Interacts (via TPR domain) with S100A1, S100A2 and S100A6; the interaction is Ca(2+) dependent. Interaction with S100A1 and S100A2 (but not with S100A6) leads to inhibition of FKBP4-HSP90 interaction. Interacts with dynein; causes partially NR3C1 transport to the nucleus. In terms of processing, phosphorylation by CK2 results in loss of HSP90 binding activity. As to expression, widely detected in the brain (at protein level).

The protein localises to the cytoplasm. It localises to the cytosol. It is found in the mitochondrion. The protein resides in the nucleus. Its subcellular location is the cytoskeleton. The protein localises to the cell projection. It localises to the axon. It carries out the reaction [protein]-peptidylproline (omega=180) = [protein]-peptidylproline (omega=0). Inhibited by FK506. Immunophilin protein with PPIase and co-chaperone activities. Component of unligated steroid receptors heterocomplexes through interaction with heat-shock protein 90 (HSP90). Plays a role in the intracellular trafficking of heterooligomeric forms of steroid hormone receptors between cytoplasm and nuclear compartments. May have a protective role against oxidative stress in mitochondria. Also acts as a regulator of microtubule dynamics by inhibiting MAPT/TAU ability to promote microtubule assembly. The PPIase activity controls neuronal growth cones via regulation of TRPC1 channel opening. The chain is Peptidyl-prolyl cis-trans isomerase FKBP4 (Fkbp4) from Rattus norvegicus (Rat).